We begin with the raw amino-acid sequence, 581 residues long: Proline--tRNA ligase (581 aa).

Belongs to the class-II aminoacyl-tRNA synthetase family. ProS type 1 subfamily. In terms of assembly, homodimer.

The protein resides in the cytoplasm. The catalysed reaction is tRNA(Pro) + L-proline + ATP = L-prolyl-tRNA(Pro) + AMP + diphosphate. Catalyzes the attachment of proline to tRNA(Pro) in a two-step reaction: proline is first activated by ATP to form Pro-AMP and then transferred to the acceptor end of tRNA(Pro). As ProRS can inadvertently accommodate and process non-cognate amino acids such as alanine and cysteine, to avoid such errors it has two additional distinct editing activities against alanine. One activity is designated as 'pretransfer' editing and involves the tRNA(Pro)-independent hydrolysis of activated Ala-AMP. The other activity is designated 'posttransfer' editing and involves deacylation of mischarged Ala-tRNA(Pro). The misacylated Cys-tRNA(Pro) is not edited by ProRS. The chain is Proline--tRNA ligase from Variovorax paradoxus (strain S110).